Reading from the N-terminus, the 403-residue chain is Inhibitor of growth protein 3 (403 aa).

The disordered stretch occupies residues 112-149 (DTPSQPVNNHHAHSHTPVEKRKYNPTSHHTTTDHIPEK). Residues Lys133, Lys150, and Lys152 each participate in a glycyl lysine isopeptide (Lys-Gly) (interchain with G-Cter in SUMO2) cross-link. Lys166 is subject to N6-acetyllysine. Residue Lys241 forms a Glycyl lysine isopeptide (Lys-Gly) (interchain with G-Cter in SUMO2) linkage. An N6-acetyllysine modification is found at Lys249. The tract at residues 271-310 (TQNASSSAADSRSGRKSKNNNKSSSQQSSSSSSSSSLSSC) is disordered. Residues 290–310 (NNKSSSQQSSSSSSSSSLSSC) are compositionally biased toward low complexity. Residues 345–394 (PRYCICNQVSYGEMVGCDNQDCPIEWFHYGCVGLTEAPKGKWYCPQCTAA) form a PHD-type zinc finger. Residues Cys348, Cys350, Cys361, Cys366, His372, Cys375, Cys388, and Cys391 each coordinate Zn(2+).

This sequence belongs to the ING family. As to quaternary structure, interacts with H3K4me3 and to a lesser extent with H3K4me2. Component of the NuA4 histone acetyltransferase complex which contains the catalytic subunit KAT5/TIP60 and the subunits EP400, TRRAP/PAF400, BRD8/SMAP, EPC1, DMAP1/DNMAP1, RUVBL1/TIP49, RUVBL2, ING3, actin, ACTL6A/BAF53A, MORF4L1/MRG15, MORF4L2/MRGX, MRGBP, YEATS4/GAS41, VPS72/YL1 and MEAF6. The NuA4 complex interacts with MYC. HTATTIP/TIP60, EPC1, and ING3 together constitute a minimal HAT complex termed Piccolo NuA4. Component of a SWR1-like complex.

It is found in the nucleus. Its function is as follows. Component of the NuA4 histone acetyltransferase (HAT) complex which is involved in transcriptional activation of select genes principally by acetylation of nucleosomal histones H4 and H2A. This modification may both alter nucleosome - DNA interactions and promote interaction of the modified histones with other proteins which positively regulate transcription. This complex may be required for the activation of transcriptional programs associated with oncogene and proto-oncogene mediated growth induction, tumor suppressor mediated growth arrest and replicative senescence, apoptosis, and DNA repair. NuA4 may also play a direct role in DNA repair when directly recruited to sites of DNA damage. Component of a SWR1-like complex that specifically mediates the removal of histone H2A.Z/H2AZ1 from the nucleosome. The polypeptide is Inhibitor of growth protein 3 (ING3) (Pongo abelii (Sumatran orangutan)).